The following is a 429-amino-acid chain: Apolipoprotein A-IV (429 aa).

A signal peptide spans 1 to 20; it reads MFLKAVVLTLALVAVTGARA. 13 consecutive repeat copies span residues 33-54, 60-81, 82-103, 115-136, 137-158, 159-180, 181-202, 203-224, 225-246, 247-268, 269-286, 287-308, and 309-330. The interval 33 to 330 is 13 X 22 AA approximate tandem repeats; sequence DYFSQLSSNA…QMEQLRQKLG (298 aa). Residues 359–429 are disordered; sequence KEKESQDNTL…QVQMLAPLES (71 aa). Residues 381 to 420 show a composition bias toward low complexity; the sequence is QEQQQEQEQEQQQQQEQQQQQEQQREQQQQEQQQEQQQEQ.

Belongs to the apolipoprotein A1/A4/E family. Homodimer. In terms of processing, phosphorylation sites are present in the extracellular medium. As to expression, secreted in plasma.

The protein resides in the secreted. May have a role in chylomicrons and VLDL secretion and catabolism. Required for efficient activation of lipoprotein lipase by ApoC-II; potent activator of LCAT. Apoa-IV is a major component of HDL and chylomicrons. In Macaca fascicularis (Crab-eating macaque), this protein is Apolipoprotein A-IV (APOA4).